The primary structure comprises 116 residues: Cocaine- and amphetamine-regulated transcript protein (116 aa).

The signal sequence occupies residues 1–27 (MESPRLRLLPLLGAALLLLLPLLGALA). Phosphotyrosine is present on Y41. A Phosphoserine modification is found at S48. 3 disulfides stabilise this stretch: C82/C100, C88/C108, and C102/C115.

Belongs to the CART family.

It is found in the secreted. Functionally, satiety factor closely associated with the actions of leptin and neuropeptide y; this anorectic peptide inhibits both normal and starvation-induced feeding and completely blocks the feeding response induced by neuropeptide Y and regulated by leptin in the hypothalamus. The sequence is that of Cocaine- and amphetamine-regulated transcript protein (CARTPT) from Bos taurus (Bovine).